The sequence spans 162 residues: Corticoliberin (162 aa).

The N-terminal stretch at 1-24 (MKFQLWVSTGILLVSLLPCHECRA) is a signal peptide. A propeptide spanning residues 25-119 (FIKSPASSPG…QEDPTEKAKR (95 aa)) is cleaved from the precursor. The segment at 91 to 122 (SQPGMRAASLDGADSPYSAQEDPTEKAKRAEE) is disordered. Over residues 113 to 122 (PTEKAKRAEE) the composition is skewed to basic and acidic residues. Isoleucine amide is present on I160.

It belongs to the sauvagine/corticotropin-releasing factor/urotensin I family.

The protein localises to the secreted. In terms of biological role, this hormone from hypothalamus regulates the release of corticotropin from pituitary gland. This Xenopus laevis (African clawed frog) protein is Corticoliberin (crh).